The following is a 91-amino-acid chain: Sm-like protein LSM6A (91 aa).

The 73-residue stretch at 14 to 86 folds into the Sm domain; the sequence is TPADFLKSIR…VLYISTVNMT (73 aa).

This sequence belongs to the snRNP Sm proteins family. Component of the heptameric LSM1-LSM7 complex that forms a seven-membered ring structure with a donut shape. The LSM subunits are arranged in the order LSM1, LSM2, LSM3, LSM6, LSM5, LSM7 and LSM4. Component of the heptameric LSM2-LSM8 complex that forms a seven-membered ring structure with a donut shape. The LSM subunits are arranged in the order LSM8, LSM2, LSM3, LSM6, LSM5, LSM7 and LSM4. LSM6A subunit interacts only with its two neighboring subunits, LSM3A or LSM3B and LSM5. Expressed in roots, leaves, stems, flowers and siliques.

Its subcellular location is the cytoplasm. The protein resides in the nucleus. In terms of biological role, component of LSM protein complexes, which are involved in RNA processing. Component of the cytoplasmic LSM1-LSM7 complex which is involved in mRNA degradation by promoting decapping and leading to accurate 5'-3' mRNA decay. The cytoplasmic LSM1-LSM7 complex regulates developmental gene expression by the decapping of specific development-related transcripts. Component of the nuclear LSM2-LSM8 complex which is involved splicing nuclear mRNAs. LSM2-LSM8 binds directly to the U6 small nuclear RNAs (snRNAs) and is essential for accurate splicing of selected development-related mRNAs through the stabilization of the spliceosomal U6 snRNA. Plays a critical role in the regulation of development-related gene expression. The polypeptide is Sm-like protein LSM6A (Arabidopsis thaliana (Mouse-ear cress)).